Consider the following 325-residue polypeptide: Delta(1)-pyrroline-2-carboxylate reductase (325 aa).

It belongs to the ornithine cyclodeaminase/mu-crystallin family.

The catalysed reaction is L-proline + NAD(+) = 1-pyrroline-2-carboxylate + NADH + H(+). The enzyme catalyses L-proline + NADP(+) = 1-pyrroline-2-carboxylate + NADPH + H(+). Its function is as follows. Catalyzes the reduction of Delta(1)-pyrroline-2-carboxylate (Pyr2C) to L-proline, using preferentially NADPH over NADH as the electron donor. May be involved in a degradation pathway that converts trans-3-hydroxy-L-proline (t3LHyp) to L-proline. This Bacillus cereus (strain ZK / E33L) protein is Delta(1)-pyrroline-2-carboxylate reductase.